The primary structure comprises 185 residues: Threonylcarbamoyl-AMP synthase (185 aa).

In terms of domain architecture, YrdC-like spans 4 to 185 (SWRVQQAARE…LATGEIVRPG (182 aa)).

It belongs to the SUA5 family. TsaC subfamily.

Its subcellular location is the cytoplasm. The catalysed reaction is L-threonine + hydrogencarbonate + ATP = L-threonylcarbamoyladenylate + diphosphate + H2O. Required for the formation of a threonylcarbamoyl group on adenosine at position 37 (t(6)A37) in tRNAs that read codons beginning with adenine. Catalyzes the conversion of L-threonine, HCO(3)(-)/CO(2) and ATP to give threonylcarbamoyl-AMP (TC-AMP) as the acyladenylate intermediate, with the release of diphosphate. This Pseudomonas putida (strain W619) protein is Threonylcarbamoyl-AMP synthase.